A 721-amino-acid chain; its full sequence is uncharacterized protein (721 aa).

Residues 6 to 26 (QLIFVNFYVILIIWWFVMGIL) form a helical membrane-spanning segment. 308 to 315 (GGTGSGKT) is an ATP binding site.

The protein belongs to the GSP E family. This protein undergoes a protein self splicing that involves a post-translational excision of the intervening region (intein) followed by peptide ligation.

It is found in the membrane. This is an uncharacterized protein from Methanocaldococcus jannaschii (strain ATCC 43067 / DSM 2661 / JAL-1 / JCM 10045 / NBRC 100440) (Methanococcus jannaschii).